Here is a 294-residue protein sequence, read N- to C-terminus: Ribosomal RNA small subunit methyltransferase I (294 aa).

This sequence belongs to the methyltransferase superfamily. RsmI family.

It is found in the cytoplasm. The catalysed reaction is cytidine(1402) in 16S rRNA + S-adenosyl-L-methionine = 2'-O-methylcytidine(1402) in 16S rRNA + S-adenosyl-L-homocysteine + H(+). In terms of biological role, catalyzes the 2'-O-methylation of the ribose of cytidine 1402 (C1402) in 16S rRNA. This Mesorhizobium japonicum (strain LMG 29417 / CECT 9101 / MAFF 303099) (Mesorhizobium loti (strain MAFF 303099)) protein is Ribosomal RNA small subunit methyltransferase I.